A 354-amino-acid polypeptide reads, in one-letter code: Uroporphyrinogen decarboxylase (354 aa).

Substrate is bound by residues 27–31 (RQAGR), F46, D77, Y153, T208, and H326.

This sequence belongs to the uroporphyrinogen decarboxylase family. As to quaternary structure, homodimer.

The protein resides in the cytoplasm. It carries out the reaction uroporphyrinogen III + 4 H(+) = coproporphyrinogen III + 4 CO2. Its pathway is porphyrin-containing compound metabolism; protoporphyrin-IX biosynthesis; coproporphyrinogen-III from 5-aminolevulinate: step 4/4. Functionally, catalyzes the decarboxylation of four acetate groups of uroporphyrinogen-III to yield coproporphyrinogen-III. The polypeptide is Uroporphyrinogen decarboxylase (Neisseria meningitidis serogroup B (strain ATCC BAA-335 / MC58)).